We begin with the raw amino-acid sequence, 239 residues long: Ribonuclease P protein component 3 (239 aa).

Belongs to the eukaryotic/archaeal RNase P protein component 3 family. As to quaternary structure, consists of a catalytic RNA component and at least 4-5 protein subunits.

Its subcellular location is the cytoplasm. It catalyses the reaction Endonucleolytic cleavage of RNA, removing 5'-extranucleotides from tRNA precursor.. Part of ribonuclease P, a protein complex that generates mature tRNA molecules by cleaving their 5'-ends. In Methanosarcina barkeri (strain Fusaro / DSM 804), this protein is Ribonuclease P protein component 3.